Here is a 311-residue protein sequence, read N- to C-terminus: Probable manganese-dependent inorganic pyrophosphatase (311 aa).

6 residues coordinate Mn(2+): histidine 9, aspartate 13, aspartate 15, aspartate 75, histidine 97, and aspartate 149.

This sequence belongs to the PPase class C family. It depends on Mn(2+) as a cofactor.

The protein localises to the cytoplasm. It carries out the reaction diphosphate + H2O = 2 phosphate + H(+). This Lactobacillus helveticus (strain DPC 4571) protein is Probable manganese-dependent inorganic pyrophosphatase.